We begin with the raw amino-acid sequence, 212 residues long: MNIFRLTGDLSHLAAIVILLLKIWKTRSCAGISGKSQLLFALVFTTRYLDLFTSFISLYNTSMKLIYIACSYATVYLIYMKFKATYDGNHDTFRVEFLVVPVGGLSFLVNHDFSPLEILWTFSIYLESVAILPQLFMISKTGEAETITTHYLFFLGLYRALYLVNWIWRFYFEGFFDLIAVVAGVVQTILYCDFFYLYITKVLKGKKLSLPA.

At 1 to 4 (MNIF) the chain is on the lumenal side. A helical membrane pass occupies residues 5–24 (RLTGDLSHLAAIVILLLKIW). The Cytoplasmic segment spans residues 25–32 (KTRSCAGI). The chain crosses the membrane as a helical span at residues 33–52 (SGKSQLLFALVFTTRYLDLF). Residues 47-48 (RY) form an interaction with the K-D-E-L motif on target proteins region. Topologically, residues 53 to 58 (TSFISL) are lumenal. The helical transmembrane segment at 59–79 (YNTSMKLIYIACSYATVYLIY) threads the bilayer. Topologically, residues 80–92 (MKFKATYDGNHDT) are cytoplasmic. A helical transmembrane segment spans residues 93 to 110 (FRVEFLVVPVGGLSFLVN). At 111 to 116 (HDFSPL) the chain is on the lumenal side. A helical transmembrane segment spans residues 117-135 (EILWTFSIYLESVAILPQL). The Cytoplasmic segment spans residues 136–149 (FMISKTGEAETITT). The helical transmembrane segment at 150-168 (HYLFFLGLYRALYLVNWIW) threads the bilayer. Residues 159–169 (RALYLVNWIWR) are interaction with the K-D-E-L motif on target proteins. Residues 169–178 (RFYFEGFFDL) lie on the Lumenal side of the membrane. Residues 179–199 (IAVVAGVVQTILYCDFFYLYI) traverse the membrane as a helical segment. Residues 200-212 (TKVLKGKKLSLPA) lie on the Cytoplasmic side of the membrane. Residues 204–207 (KGKK) are important for recycling of cargo proteins with the sequence motif K-D-E-L from the Golgi to the endoplasmic reticulum.

Belongs to the ERD2 family.

It localises to the endoplasmic reticulum membrane. It is found in the golgi apparatus membrane. Its subcellular location is the cytoplasmic vesicle. The protein resides in the COPI-coated vesicle membrane. In terms of biological role, membrane receptor that binds the K-D-E-L sequence motif in the C-terminal part of endoplasmic reticulum resident proteins and maintains their localization in that compartment by participating to their vesicle-mediated recycling back from the Golgi. Binding is pH dependent, and is optimal at pH 5-5.4. This is ER lumen protein-retaining receptor 2 (Kdelr2) from Mus musculus (Mouse).